We begin with the raw amino-acid sequence, 438 residues long: Enolase (438 aa).

Glutamine 174 lines the (2R)-2-phosphoglycerate pocket. Glutamate 216 functions as the Proton donor in the catalytic mechanism. Mg(2+) is bound by residues aspartate 253, glutamate 297, and aspartate 324. (2R)-2-phosphoglycerate contacts are provided by lysine 349, arginine 378, serine 379, and lysine 400. Lysine 349 acts as the Proton acceptor in catalysis.

The protein belongs to the enolase family. As to quaternary structure, component of the RNA degradosome, a multiprotein complex involved in RNA processing and mRNA degradation. Mg(2+) is required as a cofactor.

The protein localises to the cytoplasm. It localises to the secreted. It is found in the cell surface. It carries out the reaction (2R)-2-phosphoglycerate = phosphoenolpyruvate + H2O. It participates in carbohydrate degradation; glycolysis; pyruvate from D-glyceraldehyde 3-phosphate: step 4/5. In terms of biological role, catalyzes the reversible conversion of 2-phosphoglycerate (2-PG) into phosphoenolpyruvate (PEP). It is essential for the degradation of carbohydrates via glycolysis. The sequence is that of Enolase from Psychrobacter sp. (strain PRwf-1).